Here is a 316-residue protein sequence, read N- to C-terminus: Ferrochelatase (316 aa).

Residues H190 and E271 each contribute to the Fe cation site.

It belongs to the ferrochelatase family.

The protein resides in the cytoplasm. It carries out the reaction heme b + 2 H(+) = protoporphyrin IX + Fe(2+). It participates in porphyrin-containing compound metabolism; protoheme biosynthesis; protoheme from protoporphyrin-IX: step 1/1. In terms of biological role, catalyzes the ferrous insertion into protoporphyrin IX. The chain is Ferrochelatase from Sulfurimonas denitrificans (strain ATCC 33889 / DSM 1251) (Thiomicrospira denitrificans (strain ATCC 33889 / DSM 1251)).